Here is a 261-residue protein sequence, read N- to C-terminus: MAERYTAENLTFTRSGRTLTDNVSLSLSQGELVTLIGPNGAGKSTLLRLLTGYLKPDSGGCSLAGKALDEWHPQTLSRYRAVMRQQSQPGFDWQVEEIVGMGRAPWTRHPEPSIVREVLQLTGCLPLAGRRYHALSGGEQQRVQLARALAQLGVTERRAAWLFLDEPTSALDLYHQQHLLRLLKSLTRQGHLHACVVLHDLNLAALWSDRILLLHNGRIVSQGIPETVLQADALAHWYGAQVHVGMTSGARRTAGFSRPLA.

Residues Tyr-5 to Gln-241 form the ABC transporter domain. Residue Gly-37 to Ser-44 coordinates ATP.

Belongs to the ABC transporter superfamily. Heme (hemin) importer (TC 3.A.1.14.5) family. The complex is composed of two ATP-binding proteins (HmuV), two transmembrane proteins (HmuU) and a solute-binding protein (HmuT).

The protein localises to the cell inner membrane. In terms of biological role, part of the ABC transporter complex HmuTUV involved in hemin import. Responsible for energy coupling to the transport system. The polypeptide is Hemin import ATP-binding protein HmuV (Enterobacter cloacae).